A 120-amino-acid polypeptide reads, in one-letter code: NAD(P)H-quinone oxidoreductase subunit 3, chloroplastic (120 aa).

A run of 3 helical transmembrane segments spans residues 2-22 (FLLYEYDIFWAFLIISSVIPI), 64-84 (MFALVFVVFDVETIFLYPWAL), and 88-108 (ILGVSVFIEALIFVLILVLGL).

Belongs to the complex I subunit 3 family. In terms of assembly, NDH is composed of at least 16 different subunits, 5 of which are encoded in the nucleus.

The protein resides in the plastid. It localises to the chloroplast thylakoid membrane. It catalyses the reaction a plastoquinone + NADH + (n+1) H(+)(in) = a plastoquinol + NAD(+) + n H(+)(out). It carries out the reaction a plastoquinone + NADPH + (n+1) H(+)(in) = a plastoquinol + NADP(+) + n H(+)(out). In terms of biological role, NDH shuttles electrons from NAD(P)H:plastoquinone, via FMN and iron-sulfur (Fe-S) centers, to quinones in the photosynthetic chain and possibly in a chloroplast respiratory chain. The immediate electron acceptor for the enzyme in this species is believed to be plastoquinone. Couples the redox reaction to proton translocation, and thus conserves the redox energy in a proton gradient. The polypeptide is NAD(P)H-quinone oxidoreductase subunit 3, chloroplastic (Oenothera biennis (German evening primrose)).